The sequence spans 783 residues: Polyribonucleotide nucleotidyltransferase 1, mitochondrial (783 aa).

The N-terminal 46 residues, 1–46, are a transit peptide targeting the mitochondrion; the sequence is MAACRYCCSCLRLRPLSDGPFCLPGRDRALTQLLVRALWSSTGSRA. Residues lysine 250, lysine 264, lysine 285, and lysine 289 each carry the N6-acetyllysine modification. The residue at position 552 (lysine 552) is an N6-succinyllysine. The KH domain occupies 605-664; the sequence is PVVETVQVPLSKRAKFVGPGGYNLKKLQAETGVTISQVDEETFSVFAPTPSALHEARDFI. Residues 679-750 enclose the S1 motif domain; sequence GAVYTATITE…ADGRMRLSRK (72 aa). Serine 754 and serine 782 each carry phosphoserine.

It belongs to the polyribonucleotide nucleotidyltransferase family. As to quaternary structure, homotrimer; in free form. Homooligomer. Component of the mitochondrial degradosome (mtEXO) complex which is a heteropentamer containing 2 copies of SUPV3L1 and 3 copies of PNPT1. As part of the mitochondrial degradosome complex, interacts with GRSF1 in an RNA-dependent manner; the interaction enhances the activity of the complex. Interacts with TCL1A; the interaction has no effect on PNPT1 exonuclease activity.

The protein localises to the cytoplasm. The protein resides in the mitochondrion matrix. It localises to the mitochondrion intermembrane space. It carries out the reaction RNA(n+1) + phosphate = RNA(n) + a ribonucleoside 5'-diphosphate. Its function is as follows. RNA-binding protein implicated in numerous RNA metabolic processes. Catalyzes the phosphorolysis of single-stranded polyribonucleotides processively in the 3'-to-5' direction. Mitochondrial intermembrane factor with RNA-processing exoribonulease activity. Component of the mitochondrial degradosome (mtEXO) complex, that degrades 3' overhang double-stranded RNA with a 3'-to-5' directionality in an ATP-dependent manner. Involved in the degradation of non-coding mitochondrial transcripts (MT-ncRNA) and tRNA-like molecules. Required for correct processing and polyadenylation of mitochondrial mRNAs. Plays a role as a cytoplasmic RNA import factor that mediates the translocation of small RNA components like the 5S RNA, the RNA subunit of ribonuclease P and the mitochondrial RNA-processing (MRP) RNA, into the mitochondrial matrix. Plays a role in mitochondrial morphogenesis and respiration; regulates the expression of the electron transport chain (ETC) components at the mRNA and protein levels. In the cytoplasm, shows a 3'-to-5' exoribonuclease mediating mRNA degradation activity; degrades c-myc mRNA upon treatment with IFNB1/IFN-beta, resulting in a growth arrest in melanoma cells. Regulates the stability of specific mature miRNAs in melanoma cells; specifically and selectively degrades miR-221, preferentially. Also plays a role in RNA cell surveillance by cleaning up oxidized RNAs. Binds to the RNA subunit of ribonuclease P, MRP RNA and miR-221 microRNA. The chain is Polyribonucleotide nucleotidyltransferase 1, mitochondrial (PNPT1) from Pongo abelii (Sumatran orangutan).